The sequence spans 300 residues: Cation-efflux pump FieF (300 aa).

The next 4 helical transmembrane spans lie at 12-32 (AAIA…FAWW), 39-59 (ILAA…NLLV), 82-102 (AALA…LTGI), and 114-134 (PGVG…LVSF). Zn(2+) is bound by residues Asp45 and Asp49. His153 and Asp157 together coordinate Zn(2+). 2 helical membrane-spanning segments follow: residues 156–176 (SDVM…YGWH) and 178–198 (ADAL…LRMG).

Belongs to the cation diffusion facilitator (CDF) transporter (TC 2.A.4) family. FieF subfamily. Homodimer.

The protein resides in the cell inner membrane. The enzyme catalyses Zn(2+)(in) + H(+)(out) = Zn(2+)(out) + H(+)(in). It carries out the reaction Cd(2+)(in) + H(+)(out) = Cd(2+)(out) + H(+)(in). It catalyses the reaction Fe(2+)(in) + H(+)(out) = Fe(2+)(out) + H(+)(in). Divalent metal cation transporter which exports Zn(2+), Cd(2+) and possibly Fe(2+). May be involved in zinc and iron detoxification by efflux. This chain is Cation-efflux pump FieF, found in Escherichia coli O7:K1 (strain IAI39 / ExPEC).